Here is a 79-residue protein sequence, read N- to C-terminus: UPF0180 protein BCE_1513 (79 aa).

This sequence belongs to the UPF0180 family.

In Bacillus cereus (strain ATCC 10987 / NRS 248), this protein is UPF0180 protein BCE_1513.